Consider the following 561-residue polypeptide: MSEEDIRAARLEKVEQLKQLGTNPYAYRWESTHHAAQLQEKFADLTSGEEVDTEVAIAGRIMARRVFGKLAFFTLEDETGTIQLYLEKNRIQESMAETDADAFNHLKQLTDVGDILGAKGTIKRTEKGELSIYVKEYTILTKSLLPLPDKWHGLTDVAKRYRQRYVDLIVNPEVRQTFRRRAQITAGIRRYLEQRDFLEIETPVLQSETGGADARPFITYHNTLEMELYLRIATELHLKRLIVGGFEKVFELGRVFRNEGISTRHNPEFTSIEIYQAYADYNDMMALTEGIITTVAQDVLGTLQITYQGETVDLTPPWRRVTMHDLVKEYTGLDFHSFQTLEEAKSASKNAGIPGVDEAQTIGKILNLAFEEKVEANLIQPTFVIDYPVEISPLAKPHRSQPGLVERFELFIVGRETANSFSELTDPIDQRERLEAQAAKKAAGDLEAQGVDEDFLTALEYGMPPTGGLGIGIDRLVMLLTDSASIRDVIAFPLLKPEGSFIKEYRYESTTQTLTMEFDSGSVYEYFKVPLTVKEELDNAPSKGQYFHKFIKGKFKYEQLS.

Residues Glu409 and Glu416 each coordinate Mg(2+).

The protein belongs to the class-II aminoacyl-tRNA synthetase family. Homodimer. Requires Mg(2+) as cofactor.

Its subcellular location is the cytoplasm. The catalysed reaction is tRNA(Lys) + L-lysine + ATP = L-lysyl-tRNA(Lys) + AMP + diphosphate. This chain is Lysine--tRNA ligase, found in Trichormus variabilis (strain ATCC 29413 / PCC 7937) (Anabaena variabilis).